The chain runs to 391 residues: S-adenosylmethionine synthase (391 aa).

ATP is bound at residue His-19. Asp-21 provides a ligand contact to Mg(2+). Residue Glu-47 participates in K(+) binding. The L-methionine site is built by Glu-60 and Gln-103. The interval 103–113 (QSPDIAQGVDR) is flexible loop. Residues 168–170 (DGK), 236–237 (RF), Asp-245, 251–252 (RK), Ala-268, and Lys-272 contribute to the ATP site. Asp-245 lines the L-methionine pocket. L-methionine is bound at residue Lys-276.

It belongs to the AdoMet synthase family. In terms of assembly, homotetramer; dimer of dimers. Requires Mg(2+) as cofactor. K(+) serves as cofactor.

It is found in the cytoplasm. The catalysed reaction is L-methionine + ATP + H2O = S-adenosyl-L-methionine + phosphate + diphosphate. It functions in the pathway amino-acid biosynthesis; S-adenosyl-L-methionine biosynthesis; S-adenosyl-L-methionine from L-methionine: step 1/1. Its function is as follows. Catalyzes the formation of S-adenosylmethionine (AdoMet) from methionine and ATP. The overall synthetic reaction is composed of two sequential steps, AdoMet formation and the subsequent tripolyphosphate hydrolysis which occurs prior to release of AdoMet from the enzyme. This chain is S-adenosylmethionine synthase, found in Oleidesulfovibrio alaskensis (strain ATCC BAA-1058 / DSM 17464 / G20) (Desulfovibrio alaskensis).